We begin with the raw amino-acid sequence, 946 residues long: Villin-4 (946 aa).

Gelsolin-like repeat units lie at residues Asn28–Lys109, Val152–Lys219, Leu274–Phe339, and Glu641–Phe715. 2 disordered regions span residues Ala744–Arg783 and Thr846–Asp902. Over residues Gln765–His777 the composition is skewed to polar residues. Positions Ser874–Asn883 are enriched in acidic residues. The region spanning Asp881 to Phe946 is the HP domain.

Belongs to the villin/gelsolin family.

The protein resides in the cytoplasm. Its subcellular location is the cytoskeleton. Functionally, ca(2+)-regulated actin-binding protein. Binds actin microfilaments (MFs). Involved in actin filament bundling, severing and capping. Caps the barbed end of actin filaments and is able to sever them in a calcium-dependent manner. This is Villin-4 from Oryza sativa subsp. indica (Rice).